We begin with the raw amino-acid sequence, 348 residues long: Methylthioribose-1-phosphate isomerase (348 aa).

Residues 51–53 (RGA), Arg94, and Gln199 each bind substrate. Residue Asp240 is the Proton donor of the active site. A substrate-binding site is contributed by 250–251 (NK).

The protein belongs to the eIF-2B alpha/beta/delta subunits family. MtnA subfamily.

The enzyme catalyses 5-(methylsulfanyl)-alpha-D-ribose 1-phosphate = 5-(methylsulfanyl)-D-ribulose 1-phosphate. It functions in the pathway amino-acid biosynthesis; L-methionine biosynthesis via salvage pathway; L-methionine from S-methyl-5-thio-alpha-D-ribose 1-phosphate: step 1/6. Catalyzes the interconversion of methylthioribose-1-phosphate (MTR-1-P) into methylthioribulose-1-phosphate (MTRu-1-P). The protein is Methylthioribose-1-phosphate isomerase of Nitrosococcus oceani (strain ATCC 19707 / BCRC 17464 / JCM 30415 / NCIMB 11848 / C-107).